A 311-amino-acid polypeptide reads, in one-letter code: Mas-related G-protein coupled receptor member E (311 aa).

Residues 1–25 lie on the Extracellular side of the membrane; that stretch reads MEPREAGQHAGAADGAQEDVAFNLV. A helical membrane pass occupies residues 26–46; the sequence is ILSLTEGLGLGGLLGNGAVLW. The Cytoplasmic segment spans residues 47–63; the sequence is LLSSNVYRNPFAIYLLD. Residues 64 to 84 traverse the membrane as a helical segment; that stretch reads VACADLIFLGCHMVAIIPDLL. The Extracellular portion of the chain corresponds to 85–95; the sequence is QGRLDFPGFVQ. The chain crosses the membrane as a helical span at residues 96–116; that stretch reads TSLATLRFFCYIVGLSLLVAV. The Cytoplasmic portion of the chain corresponds to 117 to 136; sequence SVEQCLAALFPAWYSCRRPR. The chain crosses the membrane as a helical span at residues 137–157; it reads HLTTCVCALTWACCLLLHLLL. Over 158–177 the chain is Extracellular; sequence SGACTQFFGEPSRHLCRTLW. The helical transmembrane segment at 178–198 threads the bilayer; that stretch reads LVAAVLLAVLCCTMCGASLML. The Cytoplasmic portion of the chain corresponds to 199 to 216; the sequence is LLQVERGPQRPPPRGFPT. Residues 217 to 237 traverse the membrane as a helical segment; it reads LILLAVLLFLFCGLPFGIYWL. Over 238 to 251 the chain is Extracellular; sequence SRNLLWHIPHYFYH. The chain crosses the membrane as a helical span at residues 252–272; it reads FSFLTAAVYCAAKPVVYFCLG. Topologically, residues 273-311 are cytoplasmic; that stretch reads SAQGRRLPLRLVLQRALGDEAELGAVRETSRRGLVDIAA.

This sequence belongs to the G-protein coupled receptor 1 family. Mas subfamily.

It localises to the cell membrane. Functionally, orphan receptor. May regulate nociceptor function and/or development, including the sensation or modulation of pain. This chain is Mas-related G-protein coupled receptor member E (MRGPRE), found in Macaca fascicularis (Crab-eating macaque).